Here is a 386-residue protein sequence, read N- to C-terminus: Phosphoglycerate kinase (386 aa).

Substrate is bound by residues 21–23 (DLN), R36, 59–62 (HLGR), R113, and R146. Residues K197, E314, and 340 to 343 (GGDT) contribute to the ATP site.

Belongs to the phosphoglycerate kinase family. As to quaternary structure, monomer.

Its subcellular location is the cytoplasm. It catalyses the reaction (2R)-3-phosphoglycerate + ATP = (2R)-3-phospho-glyceroyl phosphate + ADP. It functions in the pathway carbohydrate degradation; glycolysis; pyruvate from D-glyceraldehyde 3-phosphate: step 2/5. The sequence is that of Phosphoglycerate kinase from Marinobacter nauticus (strain ATCC 700491 / DSM 11845 / VT8) (Marinobacter aquaeolei).